A 320-amino-acid chain; its full sequence is Small ribosomal subunit protein uS2 (320 aa).

Residues 254–320 (GDAAKAALPV…APATTGPVSE (67 aa)) are disordered. A compositionally biased stretch (basic and acidic residues) spans 272–282 (VSAKNEAKSDD). Over residues 308 to 320 (AEAAPATTGPVSE) the composition is skewed to low complexity.

This sequence belongs to the universal ribosomal protein uS2 family.

The polypeptide is Small ribosomal subunit protein uS2 (Clavibacter sepedonicus (Clavibacter michiganensis subsp. sepedonicus)).